Reading from the N-terminus, the 428-residue chain is tRNA(Ile)-lysidine synthase (428 aa).

28 to 33 serves as a coordination point for ATP; it reads SGGVDS.

Belongs to the tRNA(Ile)-lysidine synthase family.

The protein resides in the cytoplasm. The catalysed reaction is cytidine(34) in tRNA(Ile2) + L-lysine + ATP = lysidine(34) in tRNA(Ile2) + AMP + diphosphate + H(+). Ligates lysine onto the cytidine present at position 34 of the AUA codon-specific tRNA(Ile) that contains the anticodon CAU, in an ATP-dependent manner. Cytidine is converted to lysidine, thus changing the amino acid specificity of the tRNA from methionine to isoleucine. The protein is tRNA(Ile)-lysidine synthase of Streptococcus pyogenes serotype M1.